We begin with the raw amino-acid sequence, 435 residues long: Zinc finger CCCH domain-containing protein 17 (435 aa).

Disordered stretches follow at residues 1 to 30 (MDIE…SSTS) and 58 to 107 (TAKR…GPRH). The C3H1-type 1 zinc finger occupies 28 to 54 (STSGKVCIHWRAGRCNRFPCPYLHSEL). A compositionally biased stretch (gly residues) spans 77–103 (SGGGGGRGAGGAGGPNKWGRGPGGADG). The C3H1-type 2 zinc-finger motif lies at 108 to 135 (KVPDRPCRYFLAGDCSYGEKCRYPHSYS). WD repeat units follow at residues 148–189 (GHEK…GVIN), 191–225 (GREI…EMNL), 227–264 (GPTG…NGFE), 271–308 (GHQL…CIQT), 311–348 (DHTG…SLEV), 355–395 (EHGA…DRGR), and 397–435 (FSKQ…SQTK).

This Oryza sativa subsp. japonica (Rice) protein is Zinc finger CCCH domain-containing protein 17.